Here is a 159-residue protein sequence, read N- to C-terminus: Ribosomal RNA large subunit methyltransferase H (159 aa).

S-adenosyl-L-methionine contacts are provided by residues leucine 76, glycine 108, and 127–132 (FSRMTF).

It belongs to the RNA methyltransferase RlmH family. As to quaternary structure, homodimer.

It is found in the cytoplasm. The catalysed reaction is pseudouridine(1915) in 23S rRNA + S-adenosyl-L-methionine = N(3)-methylpseudouridine(1915) in 23S rRNA + S-adenosyl-L-homocysteine + H(+). In terms of biological role, specifically methylates the pseudouridine at position 1915 (m3Psi1915) in 23S rRNA. This is Ribosomal RNA large subunit methyltransferase H from Clostridioides difficile (strain 630) (Peptoclostridium difficile).